The chain runs to 304 residues: MTQKIKCALIGPGNIGTDLLYKLKRSPFLEPVWMIGIDPESEGLKRATDMGLKTCATGVDGFLPHVLEDNVQIAFDATSAYVHAENSRKLNALGVLMIDLTPAAIGPFCVPPVNLKEHVGRREMNVNMVTCGGQATIPMVAAVSRVQPVAYGEIVATVSSKSAGPGTRKNIDEFTRTTAGAVEKVGGAKKGKAIIIINPAEPPLVMRDTVHCLTETAPDQAAITESIHAMIKEVQKYVPGYRLVNGPVFDGNRVSVYMEVTGLGDFLPTYAGNLDIMTAAGARTAEMFAEEMIKGTLKLEPVHA.

C131 (acyl-thioester intermediate) is an active-site residue. NAD(+) contacts are provided by residues 162–170 (SAGPGTRKN) and N273.

This sequence belongs to the acetaldehyde dehydrogenase family.

It carries out the reaction acetaldehyde + NAD(+) + CoA = acetyl-CoA + NADH + H(+). This chain is Acetaldehyde dehydrogenase 2, found in Dechloromonas aromatica (strain RCB).